The primary structure comprises 1954 residues: Chromodomain-helicase-DNA-binding protein 5 (1954 aa).

Disordered stretches follow at residues 1 to 134 (MRGP…PKSS) and 225 to 338 (PLAV…GDGY). 2 stretches are compositionally biased toward acidic residues: residues 17 to 37 (EEME…EAFD) and 72 to 90 (NDEL…ESEG). The span at 96 to 115 (NKKKKKKLKDKKEKKAKRKK) shows a compositional bias: basic residues. Residues 227-237 (AVSPPQVPQPV) are compositionally biased toward pro residues. Residues 251–272 (GVRKKIKGSKDGKKKGKGKKTA) show a composition bias toward basic residues. The segment covering 291–301 (SEEDEREESDF) has biased composition (acidic residues). Positions 321 to 330 (KKSKRRRKKK) are enriched in basic residues. 2 PHD-type zinc fingers span residues 343–390 (QDYC…CEKE) and 416–463 (MEFC…CTCP). The histone-binding stretch occupies residues 343–653 (QDYCEVCQQG…HRELMLGEDT (311 aa)). The region spanning 497-554 (LPPPKPLEGIPEREFFVKWAGLSYWHCSWVKELQLELYHTVMYRNYQRKNDMDEPPPF) is the Chromo 1 domain. Residues 549-571 (DEPPPFDYGSGDEDGKSEKRKNK) form a disordered region. Over residues 561–571 (EDGKSEKRKNK) the composition is skewed to basic and acidic residues. One can recognise a Chromo 2 domain in the interval 592-653 (MMIHRILNHS…HRELMLGEDT (62 aa)). The Helicase ATP-binding domain maps to 712-896 (RFSWAQGTDT…FHLLNFLTPE (185 aa)). Position 725–732 (725–732 (DEMGLGKT)) interacts with ATP. The DEAH box motif lies at 847–850 (DEAH). The Helicase C-terminal domain occupies 1028 to 1193 (LLQKMLKKLR…MTKQELDDIL (166 aa)). 5 disordered regions span residues 1209-1253 (MSQG…EDSS), 1351-1411 (YNDA…LPPL), 1524-1564 (YSTP…APLG), 1597-1640 (AALD…REEV), and 1658-1696 (SRGD…KKED). Acidic residues-rich tracts occupy residues 1355 to 1366 (SQEDQEWQDELS) and 1376 to 1385 (SEDEDEDFEE). Residue Gln1390 is modified to N5-methylglutamine. Residue Ser1554 is modified to Phosphoserine. Low complexity predominate over residues 1554–1564 (SPAHLLPAPLG). Composition is skewed to basic and acidic residues over residues 1600–1627 (DRVE…ETEK) and 1658–1678 (SRGD…KEPI).

It belongs to the SNF2/RAD54 helicase family. In terms of assembly, component of the nucleosome remodeling and deacetylase (NuRD) repressor complex, composed of core proteins MTA1, MTA2, MTA3, RBBP4, RBBP7, HDAC1, HDAC2, MBD2, MBD3, and peripherally associated proteins CDK2AP1, CDK2AP2, GATAD2A, GATAD2B, CHD3, CHD4 and CHD5. The exact stoichiometry of the NuRD complex is unknown, and some subunits such as MBD2 and MBD3, GATAD2A and GATAD2B, and CHD3, CHD4 and CHD5 define mutually exclusive NuRD complexes. Interacts with HDAC2. Methylated at Gln-1390 by N6AMT1. As to expression, preferentially expressed in total brain, fetal brain, and cerebellum. It is also moderately expressed in the adrenal gland and detected in testis.

The protein localises to the nucleus. The protein resides in the chromosome. The enzyme catalyses ATP + H2O = ADP + phosphate + H(+). ATP-dependent chromatin-remodeling factor that binds DNA through histones and regulates gene transcription. May specifically recognize and bind trimethylated 'Lys-27' (H3K27me3) and non-methylated 'Lys-4' of histone H3. Acts as a component of the histone deacetylase NuRD complex which participates in the remodeling of chromatin. Plays a role in the development of the nervous system by activating the expression of genes promoting neuron terminal differentiation. In parallel, it may also positively regulate the trimethylation of histone H3 at 'Lys-27' thereby specifically repressing genes that promote the differentiation into non-neuronal cell lineages. Regulates the expression of genes involved in cell proliferation and differentiation. Downstream activated genes may include CDKN2A that positively regulates the p53/TP53 pathway, which in turn, prevents cell proliferation. In spermatogenesis, it probably regulates histone hyperacetylation and the replacement of histones by transition proteins in chromatin, a crucial step in the condensation of spermatid chromatin and the production of functional spermatozoa. In Homo sapiens (Human), this protein is Chromodomain-helicase-DNA-binding protein 5.